A 392-amino-acid polypeptide reads, in one-letter code: MALMTVRDIDVKGKRVFVRVDFNVPLEDGRITDDTRIRAAVPTIRYLVEEGAVAVLASHLGRPKGQRNEKYSLAPCARRLSELLGREVVFAPDCIGEEVERLVAEQPPGSVVLLENVRFYAEEEKNDPEFAAKLARLGEIFVNDAFGTAHRAHASTRGVADHMPVRVAGFLMQKEVDIMGKALSDPDRPFVAIIGGAKVSDKIMVIENLLTKVDRLIIGGGMANTFLRARGFATGKSLVEEDRVDTARELLAKGGDKILLPTDLVVASEFKADAEQKVVPVDAIPEGWMALDIGPETARAFADVIRGAHTVVWNGPMGVFEMEPFARGTFAVAQAMADCEGVTIVGGGDSVAAVEAAGLADRMTHVSTGGGASLEFLEGKELPGVACLAVKP.

Substrate contacts are provided by residues 21–23, Arg-36, 59–62, Arg-118, and Arg-151; these read DFN and HLGR. ATP-binding positions include Lys-202, Glu-321, and 347–350; that span reads GGDS.

It belongs to the phosphoglycerate kinase family. In terms of assembly, monomer.

The protein resides in the cytoplasm. It catalyses the reaction (2R)-3-phosphoglycerate + ATP = (2R)-3-phospho-glyceroyl phosphate + ADP. It functions in the pathway carbohydrate degradation; glycolysis; pyruvate from D-glyceraldehyde 3-phosphate: step 2/5. In Symbiobacterium thermophilum (strain DSM 24528 / JCM 14929 / IAM 14863 / T), this protein is Phosphoglycerate kinase.